The following is a 147-amino-acid chain: Hemoglobin subunit epsilon (147 aa).

A Globin domain is found at 3–147; the sequence is HFTAEEKSTI…VATALAHKYH (145 aa). 2 positions are modified to phosphoserine: Ser14 and Ser51. Residues His64 and His93 each coordinate heme b.

It belongs to the globin family. Heterotetramer of two alpha chains and two epsilon chains in early embryonic hemoglobin Gower-2; two zeta chains and two epsilon chains in early embryonic hemoglobin Gower-1. In terms of tissue distribution, red blood cells.

Functionally, the epsilon chain is a beta-type chain of early mammalian embryonic hemoglobin. The protein is Hemoglobin subunit epsilon (HBE1) of Propithecus verreauxi (White sifaka).